The sequence spans 177 residues: Inner membrane-spanning protein YciB (177 aa).

5 helical membrane-spanning segments follow: residues 22 to 42 (IFIA…IHWI), 50 to 70 (ISLF…FFHN), 76 to 96 (WKIT…QFFT), 121 to 141 (FIWS…AYYF), and 149 to 169 (FKVF…SIYI).

Belongs to the YciB family.

It is found in the cell inner membrane. In terms of biological role, plays a role in cell envelope biogenesis, maintenance of cell envelope integrity and membrane homeostasis. This Buchnera aphidicola subsp. Acyrthosiphon pisum (strain APS) (Acyrthosiphon pisum symbiotic bacterium) protein is Inner membrane-spanning protein YciB.